Reading from the N-terminus, the 116-residue chain is UPF0102 protein LA_2381 (116 aa).

It belongs to the UPF0102 family.

The polypeptide is UPF0102 protein LA_2381 (Leptospira interrogans serogroup Icterohaemorrhagiae serovar Lai (strain 56601)).